A 153-amino-acid chain; its full sequence is Aspartate carbamoyltransferase regulatory chain (153 aa).

Positions 109, 114, 138, and 141 each coordinate Zn(2+).

It belongs to the PyrI family. As to quaternary structure, contains catalytic and regulatory chains. It depends on Zn(2+) as a cofactor.

Involved in allosteric regulation of aspartate carbamoyltransferase. This Vibrio vulnificus (strain YJ016) protein is Aspartate carbamoyltransferase regulatory chain.